The following is a 607-amino-acid chain: Oligoendopeptidase F homolog (607 aa).

H384 lines the Zn(2+) pocket. E385 is an active-site residue. Residues H388 and H391 each contribute to the Zn(2+) site.

This sequence belongs to the peptidase M3B family. Requires Zn(2+) as cofactor.

The sequence is that of Oligoendopeptidase F homolog (pepF) from Mycoplasma genitalium (strain ATCC 33530 / DSM 19775 / NCTC 10195 / G37) (Mycoplasmoides genitalium).